The following is a 470-amino-acid chain: Ribulose bisphosphate carboxylase large chain (470 aa).

K5 is subject to N6,N6,N6-trimethyllysine. Residues N114 and T164 each contribute to the substrate site. Residue K166 is the Proton acceptor of the active site. Substrate is bound at residue K168. Mg(2+)-binding residues include K192, D194, and E195. K192 bears the N6-carboxylysine mark. H285 (proton acceptor) is an active-site residue. Residues R286, H318, and S370 each coordinate substrate.

The protein belongs to the RuBisCO large chain family. Type I subfamily. Heterohexadecamer of 8 large chains and 8 small chains; disulfide-linked. The disulfide link is formed within the large subunit homodimers. The cofactor is Mg(2+). Post-translationally, the disulfide bond which can form in the large chain dimeric partners within the hexadecamer appears to be associated with oxidative stress and protein turnover.

It localises to the plastid. The protein localises to the chloroplast. The catalysed reaction is 2 (2R)-3-phosphoglycerate + 2 H(+) = D-ribulose 1,5-bisphosphate + CO2 + H2O. The enzyme catalyses D-ribulose 1,5-bisphosphate + O2 = 2-phosphoglycolate + (2R)-3-phosphoglycerate + 2 H(+). Functionally, ruBisCO catalyzes two reactions: the carboxylation of D-ribulose 1,5-bisphosphate, the primary event in carbon dioxide fixation, as well as the oxidative fragmentation of the pentose substrate in the photorespiration process. Both reactions occur simultaneously and in competition at the same active site. In Bertiera breviflora, this protein is Ribulose bisphosphate carboxylase large chain.